Reading from the N-terminus, the 228-residue chain is MHYLRYFAIAFLLLLSSCSVTRHKPLIEGSTTTIPNTPSSNFINGSIFQQDNSLYYGYQPLFEDRRPKNIGDILTVLLQENVSASKSSSSNASRKSNANLEMNALPKIINKIIGNDQLSTDINSNNGFNGKGGSSAANTFSGTITVTVIDILTNGNLKVIGEKKISINQGTESIRFYGIVNPKTIDHNNQVMSNLISDSKIEYIGDGYINEVQKMNWLQRLFLNYFPF.

An N-terminal signal peptide occupies residues 1–17; the sequence is MHYLRYFAIAFLLLLSS. Cysteine 18 carries N-palmitoyl cysteine lipidation. Cysteine 18 is lipidated: S-diacylglycerol cysteine.

It belongs to the FlgH family. As to quaternary structure, the basal body constitutes a major portion of the flagellar organelle and consists of four rings (L,P,S, and M) mounted on a central rod.

The protein resides in the cell membrane. It is found in the bacterial flagellum basal body. In terms of biological role, assembles around the rod to form the L-ring and probably protects the motor/basal body from shearing forces during rotation. The polypeptide is Flagellar L-ring protein (Wigglesworthia glossinidia brevipalpis).